Reading from the N-terminus, the 352-residue chain is C5a anaphylatoxin chemotactic receptor 1 (352 aa).

Positions 1–11 (MDPISNDSSEI) are enriched in polar residues. The tract at residues 1–20 (MDPISNDSSEITYDYSDGTP) is disordered. Residues 1 to 38 (MDPISNDSSEITYDYSDGTPNPDMPADGVYIPKMEPGD) are Extracellular-facing. The N-linked (GlcNAc...) asparagine glycan is linked to Asn6. 2 positions are modified to sulfotyrosine: Tyr13 and Tyr15. Residues 39 to 65 (IAALIIYLAVFLVGVTGNALVVWVTAF) form a helical membrane-spanning segment. The Cytoplasmic segment spans residues 66 to 70 (EAKRT). Residues 71–94 (VNAIWFLNLAVADLLSCLALPILF) form a helical membrane-spanning segment. Residues 95–111 (TSIVKHNHWPFGDQACI) lie on the Extracellular side of the membrane. A disulfide bridge links Cys110 with Cys189. Residues 112 to 133 (VLPSLILLNMYSSILLLATISA) form a helical membrane-spanning segment. Over 134-154 (DRFLLVFKPIWCQKFRRPGLA) the chain is Cytoplasmic. Residues 155–175 (WMACGVTWVLALLLTIPSFVF) traverse the membrane as a helical segment. Residues 176–202 (RRIHKDPYSDSILCNIDYSKGPFFIEK) are Extracellular-facing. The chain crosses the membrane as a helical span at residues 203 to 228 (AIAILRLMVGFVLPLLTLNICYTFLL). The Cytoplasmic portion of the chain corresponds to 229 to 244 (IRTWSRKATRSTKTLK). The helical transmembrane segment at 245–267 (VVMAVVTCFFVFWLPYQVTGVIL) threads the bilayer. The Extracellular segment spans residues 268 to 284 (AWLPRSSSTFQSVERLN). Residues 285–305 (SLCVSLAYINCCVNPIIYVMA) form a helical membrane-spanning segment. Topologically, residues 306–352 (GQGFHGRLRRSLPSIIRNVLSEDSLGRDSKSFTRSTMDTSTQKSQAV) are cytoplasmic. Phosphoserine occurs at positions 316, 319, 326, 329, 334, 336, and 340. Positions 332–352 (RDSKSFTRSTMDTSTQKSQAV) are disordered. Residues 337 to 352 (FTRSTMDTSTQKSQAV) show a composition bias toward polar residues.

The protein belongs to the G-protein coupled receptor 1 family. Homodimer. May also form higher-order oligomers. Interacts (when phosphorylated) with ARRB1 and ARRB2; the interaction is associated with internalization of C5aR. Sulfation plays a critical role in the association of C5aR with C5a, but no significant role in the ability of the receptor to transduce a signal and mobilize calcium in response to a small peptide agonist. In terms of processing, phosphorylated on serine residues in response to C5a binding, resulting in internalization of the receptor and short-term desensitization to the ligand.

The protein resides in the cell membrane. Its subcellular location is the cytoplasmic vesicle. Its function is as follows. Receptor for the chemotactic and inflammatory peptide anaphylatoxin C5a. The ligand interacts with at least two sites on the receptor: a high-affinity site on the extracellular N-terminus, and a second site in the transmembrane region which activates downstream signaling events. Receptor activation stimulates chemotaxis, granule enzyme release, intracellular calcium release and superoxide anion production. The polypeptide is C5a anaphylatoxin chemotactic receptor 1 (C5ar1) (Rattus norvegicus (Rat)).